The chain runs to 366 residues: Holliday junction branch migration complex subunit RuvB (366 aa).

The tract at residues 1-48 is disordered; the sequence is MIDRLMAREAIYQQSNPDPGGDPPEDGPPHGKNAADGGDEPDRGPDPD. The large ATPase domain (RuvB-L) stretch occupies residues 21-212; that stretch reads GDPPEDGPPH…FQIREHLGWY (192 aa). ATP-binding positions include Leu-51, Arg-52, Gly-93, Lys-96, Thr-97, Thr-98, 159–161, Arg-202, Tyr-212, and Arg-249; that span reads EDF. Thr-97 contributes to the Mg(2+) binding site. Residues 213–283 are small ATPAse domain (RuvB-S); the sequence is TRKELAEIVL…VCEAALDMIG (71 aa). The interval 286–366 is head domain (RuvB-H); it reads HLGLDKQDRN…KRQMPDRPLS (81 aa). Residues Arg-341, Arg-343, and Arg-346 each coordinate DNA.

The protein belongs to the RuvB family. As to quaternary structure, homohexamer. Forms an RuvA(8)-RuvB(12)-Holliday junction (HJ) complex. HJ DNA is sandwiched between 2 RuvA tetramers; dsDNA enters through RuvA and exits via RuvB. An RuvB hexamer assembles on each DNA strand where it exits the tetramer. Each RuvB hexamer is contacted by two RuvA subunits (via domain III) on 2 adjacent RuvB subunits; this complex drives branch migration. In the full resolvosome a probable DNA-RuvA(4)-RuvB(12)-RuvC(2) complex forms which resolves the HJ.

It is found in the cytoplasm. It carries out the reaction ATP + H2O = ADP + phosphate + H(+). Its function is as follows. The RuvA-RuvB-RuvC complex processes Holliday junction (HJ) DNA during genetic recombination and DNA repair, while the RuvA-RuvB complex plays an important role in the rescue of blocked DNA replication forks via replication fork reversal (RFR). RuvA specifically binds to HJ cruciform DNA, conferring on it an open structure. The RuvB hexamer acts as an ATP-dependent pump, pulling dsDNA into and through the RuvAB complex. RuvB forms 2 homohexamers on either side of HJ DNA bound by 1 or 2 RuvA tetramers; 4 subunits per hexamer contact DNA at a time. Coordinated motions by a converter formed by DNA-disengaged RuvB subunits stimulates ATP hydrolysis and nucleotide exchange. Immobilization of the converter enables RuvB to convert the ATP-contained energy into a lever motion, pulling 2 nucleotides of DNA out of the RuvA tetramer per ATP hydrolyzed, thus driving DNA branch migration. The RuvB motors rotate together with the DNA substrate, which together with the progressing nucleotide cycle form the mechanistic basis for DNA recombination by continuous HJ branch migration. Branch migration allows RuvC to scan DNA until it finds its consensus sequence, where it cleaves and resolves cruciform DNA. The chain is Holliday junction branch migration complex subunit RuvB from Rhodopirellula baltica (strain DSM 10527 / NCIMB 13988 / SH1).